Here is a 413-residue protein sequence, read N- to C-terminus: Histidine--tRNA ligase (413 aa).

The protein belongs to the class-II aminoacyl-tRNA synthetase family. In terms of assembly, homodimer.

The protein resides in the cytoplasm. It catalyses the reaction tRNA(His) + L-histidine + ATP = L-histidyl-tRNA(His) + AMP + diphosphate + H(+). In Ehrlichia canis (strain Jake), this protein is Histidine--tRNA ligase.